Here is a 469-residue protein sequence, read N- to C-terminus: Lipase A (469 aa).

A signal peptide spans 1–22 (MMFLTQLVSALFLFFLGPISYG). Residues 40 to 51 (PSEDPFYQPPPG) are compositionally biased toward pro residues. Positions 40 to 59 (PSEDPFYQPPPGYEETEPGT) are disordered. Asn-111 is a glycosylation site (N-linked (GlcNAc...) asparagine). A disulfide bridge connects residues Cys-129 and Cys-304. Catalysis depends on charge relay system residues Ser-217, Asp-361, and His-393. The cysteines at positions 377 and 421 are disulfide-linked.

It belongs to the AB hydrolase superfamily. Lipase family. Class Lip subfamily. As to quaternary structure, monomer.

It localises to the secreted. The enzyme catalyses a triacylglycerol + H2O = a diacylglycerol + a fatty acid + H(+). Hydrolyzes triglycerides, with a preference for substrates with short-chain lengths (C4 to C8). In Arthroderma benhamiae (strain ATCC MYA-4681 / CBS 112371) (Trichophyton mentagrophytes), this protein is Lipase A.